Reading from the N-terminus, the 328-residue chain is tRNA N6-adenosine threonylcarbamoyltransferase (328 aa).

2 residues coordinate Fe cation: His111 and His115. Substrate contacts are provided by residues 133-137, Asp166, Gly179, Asp183, and Asn270; that span reads LVSGG. Asp296 contributes to the Fe cation binding site.

This sequence belongs to the KAE1 / TsaD family. The cofactor is Fe(2+).

Its subcellular location is the cytoplasm. The catalysed reaction is L-threonylcarbamoyladenylate + adenosine(37) in tRNA = N(6)-L-threonylcarbamoyladenosine(37) in tRNA + AMP + H(+). Functionally, required for the formation of a threonylcarbamoyl group on adenosine at position 37 (t(6)A37) in tRNAs that read codons beginning with adenine. Is involved in the transfer of the threonylcarbamoyl moiety of threonylcarbamoyl-AMP (TC-AMP) to the N6 group of A37, together with TsaE and TsaB. TsaD likely plays a direct catalytic role in this reaction. The protein is tRNA N6-adenosine threonylcarbamoyltransferase of Phytoplasma australiense.